Reading from the N-terminus, the 37-residue chain is Large ribosomal subunit protein bL36 (37 aa).

This sequence belongs to the bacterial ribosomal protein bL36 family.

This chain is Large ribosomal subunit protein bL36, found in Caldicellulosiruptor saccharolyticus (strain ATCC 43494 / DSM 8903 / Tp8T 6331).